Reading from the N-terminus, the 329-residue chain is uncharacterized protein (329 aa).

To type I restriction system adenine methylases.

This is an uncharacterized protein from Bacillus subtilis (strain 168).